The primary structure comprises 100 residues: Urease subunit gamma (100 aa).

It belongs to the urease gamma subunit family. In terms of assembly, heterotrimer of UreA (gamma), UreB (beta) and UreC (alpha) subunits. Three heterotrimers associate to form the active enzyme.

The protein localises to the cytoplasm. It catalyses the reaction urea + 2 H2O + H(+) = hydrogencarbonate + 2 NH4(+). It functions in the pathway nitrogen metabolism; urea degradation; CO(2) and NH(3) from urea (urease route): step 1/1. The protein is Urease subunit gamma of Hahella chejuensis (strain KCTC 2396).